Reading from the N-terminus, the 331-residue chain is Elongation factor Ts, mitochondrial (331 aa).

The N-terminal 14 residues, 1 to 14, are a transit peptide targeting the mitochondrion; it reads MIVSRQVIRSVVRK.

It belongs to the EF-Ts family.

The protein resides in the mitochondrion. Functionally, associates with the EF-Tu.GDP complex and induces the exchange of GDP to GTP. It remains bound to the aminoacyl-tRNA.EF-Tu.GTP complex up to the GTP hydrolysis stage on the ribosome. This chain is Elongation factor Ts, mitochondrial, found in Brugia malayi (Filarial nematode worm).